Here is a 142-residue protein sequence, read N- to C-terminus: Small heat shock protein IbpB (142 aa).

Residues 26 to 137 (AGEGQSFPPY…AAQRIAISER (112 aa)) form the sHSP domain.

It belongs to the small heat shock protein (HSP20) family. As to quaternary structure, homodimer. Forms homomultimers of about 100-150 subunits at optimal growth temperatures. Conformation changes to oligomers at high temperatures or high ionic concentrations. The decrease in size of the multimers is accompanied by an increase in chaperone activity.

It is found in the cytoplasm. Functionally, associates with aggregated proteins, together with IbpA, to stabilize and protect them from irreversible denaturation and extensive proteolysis during heat shock and oxidative stress. Aggregated proteins bound to the IbpAB complex are more efficiently refolded and reactivated by the ATP-dependent chaperone systems ClpB and DnaK/DnaJ/GrpE. Its activity is ATP-independent. This is Small heat shock protein IbpB from Shigella boydii serotype 18 (strain CDC 3083-94 / BS512).